The sequence spans 228 residues: Clathrin light chain B (228 aa).

Methionine 1 bears the Blocked amino end (Met) mark. Residues 1 to 17 (MADDFGFFSSSESGAPE) show a composition bias toward low complexity. Positions 1-80 (MADDFGFFSS…VNGDVFQEAN (80 aa)) are disordered. Residues serine 11 and serine 13 each carry the phosphoserine modification. The interval 92–154 (ADRLTQEPES…QVEKNKINNR (63 aa)) is involved in binding clathrin heavy chain. Position 186 is a phosphothreonine (threonine 186). The cysteines at positions 198 and 208 are disulfide-linked. Lysine 203 is subject to N6-acetyllysine. Phosphoserine is present on serine 216.

The protein belongs to the clathrin light chain family. Clathrin coats are formed from molecules containing 3 heavy chains and 3 light chains. Interacts (via N-terminus) with HIP1. Interacts with HIP1R.

The protein resides in the cytoplasmic vesicle membrane. Its subcellular location is the membrane. The protein localises to the coated pit. Functionally, clathrin is the major protein of the polyhedral coat of coated pits and vesicles. This chain is Clathrin light chain B (CLTB), found in Bos taurus (Bovine).